We begin with the raw amino-acid sequence, 322 residues long: Acetyl-coenzyme A carboxylase carboxyl transferase subunit beta (322 aa).

Residues 24–293 form the CoA carboxyltransferase N-terminal domain; sequence LWIKCPDTGQ…PAVEEPAVVD (270 aa).

It belongs to the AccD/PCCB family. As to quaternary structure, acetyl-CoA carboxylase is a heterohexamer composed of biotin carboxyl carrier protein (AccB), biotin carboxylase (AccC) and two subunits each of ACCase subunit alpha (AccA) and ACCase subunit beta (AccD).

The protein resides in the cytoplasm. The catalysed reaction is N(6)-carboxybiotinyl-L-lysyl-[protein] + acetyl-CoA = N(6)-biotinyl-L-lysyl-[protein] + malonyl-CoA. It participates in lipid metabolism; malonyl-CoA biosynthesis; malonyl-CoA from acetyl-CoA: step 1/1. Component of the acetyl coenzyme A carboxylase (ACC) complex. Biotin carboxylase (BC) catalyzes the carboxylation of biotin on its carrier protein (BCCP) and then the CO(2) group is transferred by the transcarboxylase to acetyl-CoA to form malonyl-CoA. This chain is Acetyl-coenzyme A carboxylase carboxyl transferase subunit beta, found in Rhodopseudomonas palustris (strain HaA2).